The chain runs to 715 residues: Inducible lysine decarboxylase (715 aa).

Lys-367 carries the post-translational modification N6-(pyridoxal phosphate)lysine.

Belongs to the Orn/Lys/Arg decarboxylase class-I family. As to quaternary structure, homodecamer. Interacts with RavA. Requires pyridoxal 5'-phosphate as cofactor.

The protein resides in the cytoplasm. It catalyses the reaction L-lysine + H(+) = cadaverine + CO2. In Escherichia coli O157:H7, this protein is Inducible lysine decarboxylase (cadA).